The primary structure comprises 214 residues: Alpha-S1-casein (214 aa).

An N-terminal signal peptide occupies residues 1–15; that stretch reads MKLLILTCLVAVALA. Residues 59 to 91 are disordered; sequence IGSESTEDQAMEDAKQMKAGSSSSSEEIVPNSA. S61, S63, S79, S80, S81, S82, S83, S90, and S130 each carry phosphoserine.

The protein belongs to the alpha-casein family. In terms of tissue distribution, mammary gland specific. Secreted in milk.

The protein resides in the secreted. Functionally, important role in the capacity of milk to transport calcium phosphate. The sequence is that of Alpha-S1-casein (CSN1S1) from Capra hircus (Goat).